A 122-amino-acid polypeptide reads, in one-letter code: uncharacterized protein (122 aa).

2 helical membrane-spanning segments follow: residues 36–56 and 72–92; these read SVRSIIVVNILVFAGILYSQF and AVFLFICPCLLYFYQGIFSTD.

It localises to the membrane. This is an uncharacterized protein from Saccharomyces cerevisiae (strain ATCC 204508 / S288c) (Baker's yeast).